Reading from the N-terminus, the 199-residue chain is dITP/XTP pyrophosphatase (199 aa).

7–12 is a binding site for substrate; that stretch reads SNNRGK. Asp68 (proton acceptor) is an active-site residue. Residue Asp68 coordinates Mg(2+). Substrate contacts are provided by residues Ala69, 154 to 157, Lys177, and 182 to 183; these read FGFD and HR.

This sequence belongs to the HAM1 NTPase family. As to quaternary structure, homodimer. Mg(2+) serves as cofactor.

It carries out the reaction XTP + H2O = XMP + diphosphate + H(+). The catalysed reaction is dITP + H2O = dIMP + diphosphate + H(+). The enzyme catalyses ITP + H2O = IMP + diphosphate + H(+). Functionally, pyrophosphatase that catalyzes the hydrolysis of nucleoside triphosphates to their monophosphate derivatives, with a high preference for the non-canonical purine nucleotides XTP (xanthosine triphosphate), dITP (deoxyinosine triphosphate) and ITP. Seems to function as a house-cleaning enzyme that removes non-canonical purine nucleotides from the nucleotide pool, thus preventing their incorporation into DNA/RNA and avoiding chromosomal lesions. This is dITP/XTP pyrophosphatase from Albidiferax ferrireducens (strain ATCC BAA-621 / DSM 15236 / T118) (Rhodoferax ferrireducens).